We begin with the raw amino-acid sequence, 437 residues long: 26S proteasome regulatory subunit 4 homolog (437 aa).

Residues 1–47 form a disordered region; the sequence is MGQGVSSGQDKKKKKGSNQKPKYEPPVQSKFGRKKRKGGPATAEKLP. Gly2 is lipidated: N-myristoyl glycine. 223 to 230 serves as a coordination point for ATP; the sequence is GAPGTGKT. Glycyl lysine isopeptide (Lys-Gly) (interchain with G-Cter in ubiquitin) cross-links involve residues Lys234, Lys255, and Lys290.

This sequence belongs to the AAA ATPase family.

The protein resides in the cytoplasm. The protein localises to the nucleus. The 26S proteasome is involved in the ATP-dependent degradation of ubiquitinated proteins. The regulatory (or ATPase) complex confers ATP dependency and substrate specificity to the 26S complex. Has ATPase activity. In Saccharomyces cerevisiae (strain ATCC 204508 / S288c) (Baker's yeast), this protein is 26S proteasome regulatory subunit 4 homolog (RPT2).